A 619-amino-acid polypeptide reads, in one-letter code: Probable ATP-dependent RNA helicase DDX59 (619 aa).

A disordered region spans residues 1–101 (MFVPRSLKIK…KSFSKTQRWP (101 aa)). A compositionally biased stretch (basic and acidic residues) spans 12–27 (SSNDDLKSGEAKKSKP). Residue Lys26 forms a Glycyl lysine isopeptide (Lys-Gly) (interchain with G-Cter in SUMO2) linkage. A compositionally biased stretch (polar residues) spans 59–76 (ASSTNSPSCQLAEVSSTG). Ser64 bears the Phosphoserine mark. Residues 79–91 (EGVKDSHPSEEPV) are compositionally biased toward basic and acidic residues. Residues 104–133 (GEPVCVVCGRYGEYICDKTDEDVCSLECKA) form an HIT-type zinc finger. Residue Ser160 is modified to Phosphoserine. The Q motif signature appears at 203-231 (IDFEHCGFPETLNQNLKKSGYEVPTPIQM). A Helicase ATP-binding domain is found at 234 to 405 (IPVGLLGRDI…DQLLHNPVRI (172 aa)). 247 to 254 (ADTGSGKT) provides a ligand contact to ATP. The DEAD box motif lies at 353 to 356 (DEAD). Positions 416–579 (SVRQIILWVE…ILPPQLLNSP (164 aa)) constitute a Helicase C-terminal domain. Basic and acidic residues predominate over residues 583-594 (EQKRKEQQKDRQ). Residues 583 to 603 (EQKRKEQQKDRQTQNSLVTGA) are disordered.

The protein belongs to the DEAD box helicase family. DDX59 subfamily. In terms of assembly, interacts (via HIT-type zinc finger) with the RUVBL1/RUVBL2 complex in the presence of ADP.

The protein resides in the cytoplasm. The protein localises to the nucleus. The enzyme catalyses ATP + H2O = ADP + phosphate + H(+). The chain is Probable ATP-dependent RNA helicase DDX59 (Ddx59) from Mus musculus (Mouse).